A 434-amino-acid chain; its full sequence is UDP-N-acetylglucosamine 1-carboxyvinyltransferase 1 (434 aa).

22–23 (KN) contributes to the phosphoenolpyruvate binding site. UDP-N-acetyl-alpha-D-glucosamine is bound at residue Arg-93. Residue Cys-117 is the Proton donor of the active site. The residue at position 117 (Cys-117) is a 2-(S-cysteinyl)pyruvic acid O-phosphothioketal. Residues 122–126 (RPIDQ), Asp-306, and Val-328 contribute to the UDP-N-acetyl-alpha-D-glucosamine site.

The protein belongs to the EPSP synthase family. MurA subfamily.

The protein resides in the cytoplasm. It carries out the reaction phosphoenolpyruvate + UDP-N-acetyl-alpha-D-glucosamine = UDP-N-acetyl-3-O-(1-carboxyvinyl)-alpha-D-glucosamine + phosphate. Its pathway is cell wall biogenesis; peptidoglycan biosynthesis. In terms of biological role, cell wall formation. Adds enolpyruvyl to UDP-N-acetylglucosamine. This is UDP-N-acetylglucosamine 1-carboxyvinyltransferase 1 from Bacillus anthracis.